A 300-amino-acid chain; its full sequence is Bifunctional protein FolD 2 (300 aa).

NADP(+) contacts are provided by residues 165–167, serine 190, and isoleucine 231; that span reads GRS.

It belongs to the tetrahydrofolate dehydrogenase/cyclohydrolase family. Homodimer.

The enzyme catalyses (6R)-5,10-methylene-5,6,7,8-tetrahydrofolate + NADP(+) = (6R)-5,10-methenyltetrahydrofolate + NADPH. It catalyses the reaction (6R)-5,10-methenyltetrahydrofolate + H2O = (6R)-10-formyltetrahydrofolate + H(+). It participates in one-carbon metabolism; tetrahydrofolate interconversion. In terms of biological role, catalyzes the oxidation of 5,10-methylenetetrahydrofolate to 5,10-methenyltetrahydrofolate and then the hydrolysis of 5,10-methenyltetrahydrofolate to 10-formyltetrahydrofolate. The protein is Bifunctional protein FolD 2 of Pseudomonas syringae pv. tomato (strain ATCC BAA-871 / DC3000).